We begin with the raw amino-acid sequence, 345 residues long: Glycerol-3-phosphate dehydrogenase [NAD(P)+] (345 aa).

4 residues coordinate NADPH: Ser23, Tyr24, His44, and Lys118. Sn-glycerol 3-phosphate is bound by residues Lys118, Gly147, and Thr149. Ala151 contacts NADPH. Sn-glycerol 3-phosphate is bound by residues Lys203, Asp256, Ser266, Arg267, and Asn268. Lys203 functions as the Proton acceptor in the catalytic mechanism. Arg267 is an NADPH binding site. Residues Val291 and Glu293 each coordinate NADPH.

The protein belongs to the NAD-dependent glycerol-3-phosphate dehydrogenase family.

Its subcellular location is the cytoplasm. The catalysed reaction is sn-glycerol 3-phosphate + NAD(+) = dihydroxyacetone phosphate + NADH + H(+). It carries out the reaction sn-glycerol 3-phosphate + NADP(+) = dihydroxyacetone phosphate + NADPH + H(+). It functions in the pathway membrane lipid metabolism; glycerophospholipid metabolism. Catalyzes the reduction of the glycolytic intermediate dihydroxyacetone phosphate (DHAP) to sn-glycerol 3-phosphate (G3P), the key precursor for phospholipid synthesis. This Vibrio campbellii (strain ATCC BAA-1116) protein is Glycerol-3-phosphate dehydrogenase [NAD(P)+].